We begin with the raw amino-acid sequence, 462 residues long: Chitinase-like mite allergen Der p 18.0101 (462 aa).

The first 25 residues, 1 to 25 (MTRLSFTVLIFLAAYFGSNIRPNVA), serve as a signal peptide directing secretion. Positions 29 to 378 (PKTVCYYESW…HAINSNYFRG (350 aa)) constitute a GH18 domain. Cysteine 33 and cysteine 58 form a disulfide bridge. N-linked (GlcNAc...) asparagine glycans are attached at residues asparagine 338 and asparagine 441. One can recognise a Chitin-binding type-2 domain in the interval 404–462 (VFHCHQEGFFRDKTYCAKYYECKKGDFGLEQTVHHCPNHSQAFDEVSRTCVDHAKIPGC). A disulfide bond links cysteine 439 and cysteine 453.

This sequence belongs to the glycosyl hydrolase 18 family. Chitinase class II subfamily. Expressed in the peritrophic matrix of the midgut, and only very weakly in fecal pellets.

Its subcellular location is the secreted. Probably a non-catalytic chitinase-like protein, which binds to insoluble chitin and enhances the activity of the catalytic chitinases. Has weak chitin-binding activity. The polypeptide is Chitinase-like mite allergen Der p 18.0101 (Dermatophagoides pteronyssinus (European house dust mite)).